Consider the following 230-residue polypeptide: MRVVIAQCSVDYVGRLDAHLPMADRLILIKADGSVSIHADDRAYKPLNWMTPPCTFEESAIEDIDGEDTGEKLWLVENPKGEQLRITIAQIHQEIDMDLGEDPGLVKDGVEAHLQELLAEHIETLGEKYSLVRREYPTAIGPVDIMAKNSKNEFVAVEVKRRGGIDGVEQLTRYLELLNRDDLLAPVHGVFAAQEIKPQARTLAEDRGIRCVVLDYQELRGIESNELRLF.

This sequence belongs to the NucS endonuclease family.

The protein resides in the cytoplasm. In terms of biological role, cleaves both 3' and 5' ssDNA extremities of branched DNA structures. This Corynebacterium aurimucosum (strain ATCC 700975 / DSM 44827 / CIP 107346 / CN-1) (Corynebacterium nigricans) protein is Endonuclease NucS.